We begin with the raw amino-acid sequence, 536 residues long: E3 ubiquitin-protein ligase Godzilla (536 aa).

The N-terminal stretch at 1–21 (MSKRSCQILTLLGLCLVCHEA) is a signal peptide. Over 22-174 (TLVGGHVLVY…DELPFNINTQ (153 aa)) the chain is Extracellular. Residues 89-151 (FVALVARGEC…FVGHTTGKAL (63 aa)) form the PA domain. 2 N-linked (GlcNAc...) asparagine glycosylation sites follow: Asn109 and Asn132. Residues 175–195 (LILPFSILIGMCFIIMVIYMI) form a helical membrane-spanning segment. Topologically, residues 196-536 (YKCIREQRRL…HSASDRQFLI (341 aa)) are cytoplasmic. The RING-type; atypical zinc finger occupies 235–277 (CVICLEDFIEDDKLRVLPCSHPYHTHCIDPWLTENRRVCPICK). 2 disordered regions span residues 287-334 (RASR…GAAG) and 350-372 (HGTFRRGHAGRNPFEESQSSDDE). Residues 307–334 (TPLLQQQQSNGRQVGQVSSASSAGGAAG) are compositionally biased toward low complexity.

Belongs to the Godzilla family.

It is found in the endosome membrane. The catalysed reaction is S-ubiquitinyl-[E2 ubiquitin-conjugating enzyme]-L-cysteine + [acceptor protein]-L-lysine = [E2 ubiquitin-conjugating enzyme]-L-cysteine + N(6)-ubiquitinyl-[acceptor protein]-L-lysine.. It functions in the pathway protein modification; protein ubiquitination. Functionally, endosomal E3 ubiquitin-protein ligase that regulates the recycling endosome pathway by mediating ubiquitination of Synaptobrevin (Syb). Also acts as a regulator of transcytosis in wing imaginal disks by catalyzing ubiquitination of Syb: ubiquitination of Syb promotes transcytosis of wingless (wg) to the basolateral surface. The protein is E3 ubiquitin-protein ligase Godzilla of Drosophila melanogaster (Fruit fly).